Consider the following 524-residue polypeptide: Indoleacetamide hydrolase (524 aa).

Basic residues-rich tracts occupy residues 1–26 (MAKK…KATA) and 34–54 (AAKK…RRPK). Residues 1-56 (MAKKTASKKKSVSRKVTKTSSKKATARKGAVAKAAKKSVKKAAPRKSATARRPKGP) are disordered. Residues Lys133 and Ser208 each act as charge relay system in the active site. Ser232 (acyl-ester intermediate) is an active-site residue.

The protein belongs to the amidase family.

Its pathway is plant hormone metabolism; auxin biosynthesis. Functionally, hydrolyzes indole-3-acetamide (IAM) into indole-3-acetic acid (IAA). In Bradyrhizobium diazoefficiens (strain JCM 10833 / BCRC 13528 / IAM 13628 / NBRC 14792 / USDA 110), this protein is Indoleacetamide hydrolase (bam).